The chain runs to 941 residues: Translation initiation factor IF-2 (941 aa).

Positions 170–209 are enriched in basic and acidic residues; the sequence is DAQKAEVDAQKAEAEKPVEVKADESAIEEKKRVAAEESKK. Disordered stretches follow at residues 170-228 and 252-351; these read DAQK…KAAA and RAIK…SNFQ. The segment covering 256-269 has biased composition (low complexity); sequence APEPVAPVAKPAAE. The span at 271–297 shows a compositional bias: basic and acidic residues; the sequence is TLHKPADKKPGEKKDEKKPAVTADKKS. A compositionally biased stretch (polar residues) spans 299-308; sequence KSANVSSTWQ. The tr-type G domain maps to 441-610; that stretch reads PRAPVVTVMG…LLQAEVLELK (170 aa). Residues 450 to 457 are G1; sequence GHVDHGKT. 450 to 457 lines the GTP pocket; it reads GHVDHGKT. The segment at 475–479 is G2; it reads GITQH. Residues 496–499 form a G3 region; that stretch reads DTPG. GTP contacts are provided by residues 496-500 and 550-553; these read DTPGH and NKID. A G4 region spans residues 550–553; that stretch reads NKID. Residues 586-588 form a G5 region; the sequence is SAK.

This sequence belongs to the TRAFAC class translation factor GTPase superfamily. Classic translation factor GTPase family. IF-2 subfamily.

Its subcellular location is the cytoplasm. Its function is as follows. One of the essential components for the initiation of protein synthesis. Protects formylmethionyl-tRNA from spontaneous hydrolysis and promotes its binding to the 30S ribosomal subunits. Also involved in the hydrolysis of GTP during the formation of the 70S ribosomal complex. The protein is Translation initiation factor IF-2 of Herminiimonas arsenicoxydans.